Reading from the N-terminus, the 29-residue chain is Trypsin inhibitor 1 (29 aa).

Cystine bridges form between cysteine 3–cysteine 20, cysteine 10–cysteine 22, and cysteine 16–cysteine 28.

Belongs to the protease inhibitor I7 (squash-type serine protease inhibitor) family.

The protein resides in the secreted. Functionally, inhibits trypsin. In Luffa aegyptiaca (Sponge gourd), this protein is Trypsin inhibitor 1.